The primary structure comprises 155 residues: Prespore-specific protein E (155 aa).

The first 20 residues, 1–20 (MRFISIFLIIVALCVSSSWA), serve as a signal peptide directing secretion. N-linked (GlcNAc...) asparagine glycans are attached at residues Asn-22, Asn-82, Asn-85, and Asn-102. Ser-105 carries O-linked (GlcNAc) serine glycosylation. Residue Asn-133 is the site of GPI-like-anchor amidated asparagine attachment. The propeptide at 134–155 (SADKVAVGIAIIFGALISLLAL) is removed in mature form.

Post-translationally, the GPI-like-anchor contains a phosphoceramide group, rather than a phosphatidyl group.

The protein resides in the cell membrane. The chain is Prespore-specific protein E (pspE) from Dictyostelium discoideum (Social amoeba).